Consider the following 476-residue polypeptide: PRAME family member 5 (476 aa).

One copy of the LRR 1; degenerate repeat lies at 97 to 124; it reads RWKLQVLDLQDVCENFWMVWSEAMAHGC. The stretch at 179-203 is one LRR 2; degenerate repeat; it reads HLCCKKLKILGMPFRNIRSILKMVN. Residues 204–230 form an LRR 3; degenerate repeat; sequence LDCIQEVEVNCKWVLPILTQFTPYLGH. The LRR 4; degenerate repeat unit spans residues 231-266; that stretch reads MRNLQKLVLSHMDVSRYVSPEQKKEIVTQFTTQFLK. LRR repeat units follow at residues 267-292, 293-324, 325-345, 349-376, and 377-401; these read LCCLQKLSMNSVSFLEGHLDQLLSCL, KTSLKVLTITNCVLLESDLKHLSQCPSISQLK, TLDLSGIRLTNYSLVPLQILL, AATLEYLDLDDCGIIDSQVNAILPALSR, and CFELNTFSFCGNPISMATLENLLSH.

It belongs to the PRAME family.

In Homo sapiens (Human), this protein is PRAME family member 5.